We begin with the raw amino-acid sequence, 166 residues long: Lipoprotein signal peptidase (166 aa).

Transmembrane regions (helical) follow at residues 12 to 32 (WLWV…LILQ), 70 to 90 (WFFS…MYRS), and 102 to 122 (ALII…GFVV). Residues aspartate 123 and aspartate 141 contribute to the active site. The helical transmembrane segment at 137–157 (FNLADSAICIGAALIVLEGFL) threads the bilayer.

Belongs to the peptidase A8 family.

Its subcellular location is the cell inner membrane. The enzyme catalyses Release of signal peptides from bacterial membrane prolipoproteins. Hydrolyzes -Xaa-Yaa-Zaa-|-(S,diacylglyceryl)Cys-, in which Xaa is hydrophobic (preferably Leu), and Yaa (Ala or Ser) and Zaa (Gly or Ala) have small, neutral side chains.. It participates in protein modification; lipoprotein biosynthesis (signal peptide cleavage). Its function is as follows. This protein specifically catalyzes the removal of signal peptides from prolipoproteins. This Klebsiella pneumoniae subsp. pneumoniae (strain ATCC 700721 / MGH 78578) protein is Lipoprotein signal peptidase.